The sequence spans 290 residues: Glycine--tRNA ligase alpha subunit (290 aa).

The protein belongs to the class-II aminoacyl-tRNA synthetase family. In terms of assembly, tetramer of two alpha and two beta subunits.

The protein resides in the cytoplasm. The enzyme catalyses tRNA(Gly) + glycine + ATP = glycyl-tRNA(Gly) + AMP + diphosphate. The chain is Glycine--tRNA ligase alpha subunit from Synechococcus sp. (strain CC9902).